A 101-amino-acid chain; its full sequence is Small ribosomal subunit protein uS14 (101 aa).

Belongs to the universal ribosomal protein uS14 family. Part of the 30S ribosomal subunit. Contacts proteins S3 and S10.

In terms of biological role, binds 16S rRNA, required for the assembly of 30S particles and may also be responsible for determining the conformation of the 16S rRNA at the A site. The sequence is that of Small ribosomal subunit protein uS14 from Alteromonas mediterranea (strain DSM 17117 / CIP 110805 / LMG 28347 / Deep ecotype).